A 492-amino-acid chain; its full sequence is GDP-fucose protein O-fucosyltransferase 4 (492 aa).

Residues methionine 1 to arginine 7 are Cytoplasmic-facing. The helical; Signal-anchor for type II membrane protein transmembrane segment at valine 8–histidine 24 threads the bilayer. Over glycine 25–leucine 492 the chain is Lumenal. The N-linked (GlcNAc...) asparagine glycan is linked to asparagine 166. Cysteine 389 and cysteine 392 form a disulfide bridge. Asparagine 443 is a glycosylation site (N-linked (GlcNAc...) asparagine).

It belongs to the glycosyltransferase 10 family.

The protein localises to the endoplasmic reticulum membrane. It catalyses the reaction L-threonyl-[protein] + GDP-beta-L-fucose = 3-O-(alpha-L-fucosyl)-L-threonyl-[protein] + GDP + H(+). The catalysed reaction is L-seryl-[protein] + GDP-beta-L-fucose = 3-O-(alpha-L-fucosyl)-L-seryl-[protein] + GDP + H(+). The protein operates within protein modification; protein glycosylation. Its function is as follows. Protein O-fucosyltransferase that specifically catalyzes O-fucosylation of serine or threonine residues in EMI domains of target proteins, such as MMRN1, MMRN2 and EMID1. Attaches fucose through an O-glycosidic linkage. O-fucosylation of EMI domain-containing proteins may be required for facilitating protein folding and secretion. Also shows minor alpha-(1,3)-fucosyltransferase activity toward activity toward biantennary N-glycan acceptors. However, this was tested with a library of synthetic substrates and this activity is unsure in vivo. This Homo sapiens (Human) protein is GDP-fucose protein O-fucosyltransferase 4.